A 1047-amino-acid polypeptide reads, in one-letter code: Ubiquitin carboxyl-terminal hydrolase 48 (1047 aa).

One can recognise a USP domain in the interval 89 to 416; it reads VGLTNLGATC…NAYMLVYKQQ (328 aa). C98 acts as the Nucleophile in catalysis. The active-site Proton acceptor is the H348. 3 DUSP domains span residues 457–551, 567–697, and 717–830; these read QSVD…RSSL, NQLN…DHDP, and MMAN…RIHD. The segment at 609–647 is disordered; sequence LEEDEEETKHNNSKINGEKSSPGTKADGVKGDSEDGDGE. Residues 621 to 631 are compositionally biased toward polar residues; sequence SKINGEKSSPG. The segment covering 635 to 647 has biased composition (basic and acidic residues); it reads DGVKGDSEDGDGE. A disordered region spans residues 887 to 928; it reads PEFSVSGSDVEDEKEEPKLDGEKDPDFSQTEGGAKRQKLNDT. Residues 901 to 912 show a composition bias toward basic and acidic residues; sequence EEPKLDGEKDPD. The Ubiquitin-like domain occupies 961–1012; it reads VSANQTLKDLKIQIMHAFSVAPFDQNLSIDGRCLKDDSATLGSLGVIPESII.

The protein belongs to the peptidase C19 family.

It localises to the cytoplasm. The protein localises to the nucleus. The catalysed reaction is Thiol-dependent hydrolysis of ester, thioester, amide, peptide and isopeptide bonds formed by the C-terminal Gly of ubiquitin (a 76-residue protein attached to proteins as an intracellular targeting signal).. Functionally, recognizes and hydrolyzes the peptide bond at the C-terminal Gly of ubiquitin. Involved in the processing of poly-ubiquitin precursors as well as that of ubiquitinated proteins. The chain is Ubiquitin carboxyl-terminal hydrolase 48 (usp48) from Danio rerio (Zebrafish).